Here is a 477-residue protein sequence, read N- to C-terminus: MTIFEKSTSGRKGYELPEYELPSVDCGIPEHLVRKEKPLLPEVSEVDVVRHYTELASKNYSVDKGFYPLGSCTMKYNPKINEDMAMLFTQLHPMQPRETIQGAIDLMGHLKEMLCEITGTDDMTLQPAAGAHGELTGLLVARAYFEDKGELDKRRKVLVPDSAHGTNPASAAMAGFEVVELKSGKDGCVNLEELKAHLDENVAVIMLTNPNTLGLFEKDILTIAKMAHEVGALLYYDGANLNAIMGRTRPGDMGFDIVHLNLHKTFSTPHGMGGPGSGPIGVKKHLAPYLPVPVIRKAGEKYDLDYNLPKSIGMVRSFYGNFTVMVKAYTYILTMGNKGLKHVSDMAVLNANYLRAKLSKIYKVAYDRICMHEFVIDNEEFVKKTGVKTLDIAKRLLDYGLHAPTVYFPLIVHEAMMIEPTETESKRTLDEFIDAMEKIYNEAIENPELVKKAPYKTPIRRLDDVNATKYPVFRYKK.

The residue at position 264 (lysine 264) is an N6-(pyridoxal phosphate)lysine.

This sequence belongs to the GcvP family. C-terminal subunit subfamily. As to quaternary structure, the glycine cleavage system is composed of four proteins: P, T, L and H. In this organism, the P 'protein' is a heterodimer of two subunits. Pyridoxal 5'-phosphate is required as a cofactor.

The catalysed reaction is N(6)-[(R)-lipoyl]-L-lysyl-[glycine-cleavage complex H protein] + glycine + H(+) = N(6)-[(R)-S(8)-aminomethyldihydrolipoyl]-L-lysyl-[glycine-cleavage complex H protein] + CO2. In terms of biological role, the glycine cleavage system catalyzes the degradation of glycine. The P protein binds the alpha-amino group of glycine through its pyridoxal phosphate cofactor; CO(2) is released and the remaining methylamine moiety is then transferred to the lipoamide cofactor of the H protein. This is Probable glycine dehydrogenase (decarboxylating) subunit 2 from Fervidobacterium nodosum (strain ATCC 35602 / DSM 5306 / Rt17-B1).